A 228-amino-acid chain; its full sequence is THAP domain-containing protein 2 (228 aa).

Residues 1 to 80 (MPTNCAAAGC…LKMDAVPTIF (80 aa)) form a THAP-type zinc finger. The HCFC1-binding motif (HBM) signature appears at 123-126 (EHSY).

The polypeptide is THAP domain-containing protein 2 (THAP2) (Homo sapiens (Human)).